The following is an 85-amino-acid chain: ATP synthase subunit c (85 aa).

Helical transmembrane passes span 22–39 (AIGAGLAVIGAGLGIGKI) and 65–85 (AALIEGVALLAVVVCLLVFFL).

Belongs to the ATPase C chain family. F-type ATPases have 2 components, F(1) - the catalytic core - and F(0) - the membrane proton channel. F(1) has five subunits: alpha(3), beta(3), gamma(1), delta(1), epsilon(1). F(0) has three main subunits: a(1), b(2) and c(10-14). The alpha and beta chains form an alternating ring which encloses part of the gamma chain. F(1) is attached to F(0) by a central stalk formed by the gamma and epsilon chains, while a peripheral stalk is formed by the delta and b chains.

Its subcellular location is the cell inner membrane. Functionally, f(1)F(0) ATP synthase produces ATP from ADP in the presence of a proton or sodium gradient. F-type ATPases consist of two structural domains, F(1) containing the extramembraneous catalytic core and F(0) containing the membrane proton channel, linked together by a central stalk and a peripheral stalk. During catalysis, ATP synthesis in the catalytic domain of F(1) is coupled via a rotary mechanism of the central stalk subunits to proton translocation. Its function is as follows. Key component of the F(0) channel; it plays a direct role in translocation across the membrane. A homomeric c-ring of between 10-14 subunits forms the central stalk rotor element with the F(1) delta and epsilon subunits. The polypeptide is ATP synthase subunit c (Bacteroides thetaiotaomicron (strain ATCC 29148 / DSM 2079 / JCM 5827 / CCUG 10774 / NCTC 10582 / VPI-5482 / E50)).